Consider the following 918-residue polypeptide: Isoleucine--tRNA ligase (918 aa).

The 'HIGH' region motif lies at 57-67; that stretch reads PYANGDIHIGH. E568 contributes to the L-isoleucyl-5'-AMP binding site. Positions 609–613 match the 'KMSKS' region motif; the sequence is KMSKS. Residue K612 participates in ATP binding. 4 residues coordinate Zn(2+): C894, C897, C909, and C912.

Belongs to the class-I aminoacyl-tRNA synthetase family. IleS type 1 subfamily. Monomer. Zn(2+) is required as a cofactor.

The protein localises to the cytoplasm. It carries out the reaction tRNA(Ile) + L-isoleucine + ATP = L-isoleucyl-tRNA(Ile) + AMP + diphosphate. Its function is as follows. Catalyzes the attachment of isoleucine to tRNA(Ile). As IleRS can inadvertently accommodate and process structurally similar amino acids such as valine, to avoid such errors it has two additional distinct tRNA(Ile)-dependent editing activities. One activity is designated as 'pretransfer' editing and involves the hydrolysis of activated Val-AMP. The other activity is designated 'posttransfer' editing and involves deacylation of mischarged Val-tRNA(Ile). In Sulfurovum sp. (strain NBC37-1), this protein is Isoleucine--tRNA ligase.